Here is a 157-residue protein sequence, read N- to C-terminus: Crossover junction endodeoxyribonuclease RuvC (157 aa).

Residues Asp-7, Glu-67, and Asp-139 contribute to the active site. Asp-7, Glu-67, and Asp-139 together coordinate Mg(2+).

Belongs to the RuvC family. In terms of assembly, homodimer which binds Holliday junction (HJ) DNA. The HJ becomes 2-fold symmetrical on binding to RuvC with unstacked arms; it has a different conformation from HJ DNA in complex with RuvA. In the full resolvosome a probable DNA-RuvA(4)-RuvB(12)-RuvC(2) complex forms which resolves the HJ. Mg(2+) serves as cofactor.

The protein resides in the cytoplasm. It carries out the reaction Endonucleolytic cleavage at a junction such as a reciprocal single-stranded crossover between two homologous DNA duplexes (Holliday junction).. Its function is as follows. The RuvA-RuvB-RuvC complex processes Holliday junction (HJ) DNA during genetic recombination and DNA repair. Endonuclease that resolves HJ intermediates. Cleaves cruciform DNA by making single-stranded nicks across the HJ at symmetrical positions within the homologous arms, yielding a 5'-phosphate and a 3'-hydroxyl group; requires a central core of homology in the junction. The consensus cleavage sequence is 5'-(A/T)TT(C/G)-3'. Cleavage occurs on the 3'-side of the TT dinucleotide at the point of strand exchange. HJ branch migration catalyzed by RuvA-RuvB allows RuvC to scan DNA until it finds its consensus sequence, where it cleaves and resolves the cruciform DNA. The sequence is that of Crossover junction endodeoxyribonuclease RuvC from Prochlorococcus marinus (strain MIT 9312).